We begin with the raw amino-acid sequence, 337 residues long: Ribosomal RNA small subunit methyltransferase C (337 aa).

Belongs to the methyltransferase superfamily. RsmC family. As to quaternary structure, monomer.

The protein localises to the cytoplasm. It catalyses the reaction guanosine(1207) in 16S rRNA + S-adenosyl-L-methionine = N(2)-methylguanosine(1207) in 16S rRNA + S-adenosyl-L-homocysteine + H(+). In terms of biological role, specifically methylates the guanine in position 1207 of 16S rRNA in the 30S particle. The polypeptide is Ribosomal RNA small subunit methyltransferase C (Acinetobacter baumannii (strain AB307-0294)).